Here is a 558-residue protein sequence, read N- to C-terminus: CTP synthase (558 aa).

Residues 1–266 (MSAKYIFVTG…DRLVMKYLRL (266 aa)) form an amidoligase domain region. S14 serves as a coordination point for CTP. S14 lines the UTP pocket. ATP-binding positions include 15–20 (SLGKGL) and D72. Positions 72 and 140 each coordinate Mg(2+). CTP is bound by residues 147–149 (DIE), 187–192 (KTKPTQ), and K223. UTP contacts are provided by residues 187–192 (KTKPTQ) and K223. An ATP-binding site is contributed by 239–241 (KDV). The Glutamine amidotransferase type-1 domain maps to 291 to 537 (IIGIIGKYVE…IGASYEHRMK (247 aa)). G355 is a binding site for L-glutamine. C382 (nucleophile; for glutamine hydrolysis) is an active-site residue. Residues 383-386 (LGMQ), E406, and R463 contribute to the L-glutamine site. Active-site residues include H510 and E512. The disordered stretch occupies residues 539 to 558 (THTKEREEESVFLRPERVGK). A compositionally biased stretch (basic and acidic residues) spans 542–558 (KEREEESVFLRPERVGK).

It belongs to the CTP synthase family. In terms of assembly, homotetramer.

It catalyses the reaction UTP + L-glutamine + ATP + H2O = CTP + L-glutamate + ADP + phosphate + 2 H(+). The catalysed reaction is L-glutamine + H2O = L-glutamate + NH4(+). The enzyme catalyses UTP + NH4(+) + ATP = CTP + ADP + phosphate + 2 H(+). Its pathway is pyrimidine metabolism; CTP biosynthesis via de novo pathway; CTP from UDP: step 2/2. With respect to regulation, allosterically activated by GTP, when glutamine is the substrate; GTP has no effect on the reaction when ammonia is the substrate. The allosteric effector GTP functions by stabilizing the protein conformation that binds the tetrahedral intermediate(s) formed during glutamine hydrolysis. Inhibited by the product CTP, via allosteric rather than competitive inhibition. Catalyzes the ATP-dependent amination of UTP to CTP with either L-glutamine or ammonia as the source of nitrogen. Regulates intracellular CTP levels through interactions with the four ribonucleotide triphosphates. The polypeptide is CTP synthase (Koribacter versatilis (strain Ellin345)).